The sequence spans 496 residues: MASTVSVQPGRIRILKKGSWQPLDQTVGPVVYWMFRDQRLKDNWALIHAVDLANRTNAPVAVVFNLFDQFLDAKARQLGFMLKGLRQLHHQIDSLQIPFFLLQGDAKETIPNFLTECGASHLVTDFSPLREIRRCKDEVVKRTSDSLAIHEVDAHNVVPMWAASSKLEYSARTIRGKINKLLPDYLIEFPKLEPPKKKWTGMMDKKLVDWDSLIDKVVREGAEVPEIEWCVPGEDAGIEVLMGNKDGFLTKRLKNYSTDRNNPIKPKALSGLSPYLHFGQVSAQRCALEARKVRSTSPQAVDTFLEELIVRRELSDNFCYYQPHYDSLKGAWEWARKSLMDHASDKREHIYSLEQLEKGLTADPLWNASQLEMVYQGKMHGFMRMYWAKKILEWTKGPEEALSISIYLNNKYEIDGRDPSGYVGCMWSICGVHDQGWKERPVFGKIRYMNYAGCKRKFNVDSYISYVKSLVSVTKKKRKAEEQLTRDSVDPKITIV.

The Photolyase/cryptochrome alpha/beta domain occupies 28 to 160; the sequence is GPVVYWMFRD…EVDAHNVVPM (133 aa). FAD-binding positions include tyrosine 256, 269-273, 307-315, and 415-417; these read LSGLS, ELIVRRELS, and DGR. A DNA-binding site is contributed by glutamate 307.

It belongs to the DNA photolyase class-2 family. Requires FAD as cofactor. In terms of tissue distribution, highly expressed in flowers. Expressed in roots and stems.

It is found in the nucleus. The catalysed reaction is cyclobutadipyrimidine (in DNA) = 2 pyrimidine residues (in DNA).. Its function is as follows. Involved in repair of UV radiation-induced DNA damage. Catalyzes the light-dependent monomerization (300-600 nm) of cyclobutylpyrimidine dimers (CPDs), which are formed between adjacent bases on the same DNA strand upon exposure to ultraviolet radiation. Required for plant survival in the presence of UV-B light. Not involved in the repair of (6-4) photoproducts. In Arabidopsis thaliana (Mouse-ear cress), this protein is Deoxyribodipyrimidine photo-lyase (PHR1).